Consider the following 314-residue polypeptide: DNA-directed RNA polymerase subunit alpha (314 aa).

The alpha N-terminal domain (alpha-NTD) stretch occupies residues 1–228 (MAQFHYECVE…SLFEPLKDIT (228 aa)). The alpha C-terminal domain (alpha-CTD) stretch occupies residues 240-314 (DPTSQIPIEE…LPQEKVAKAT (75 aa)).

Belongs to the RNA polymerase alpha chain family. In terms of assembly, in cyanobacteria the RNAP catalytic core is composed of 2 alpha, 1 beta, 1 beta', 1 gamma and 1 omega subunit. When a sigma factor is associated with the core the holoenzyme is formed, which can initiate transcription.

It catalyses the reaction RNA(n) + a ribonucleoside 5'-triphosphate = RNA(n+1) + diphosphate. In terms of biological role, DNA-dependent RNA polymerase catalyzes the transcription of DNA into RNA using the four ribonucleoside triphosphates as substrates. The chain is DNA-directed RNA polymerase subunit alpha from Trichodesmium erythraeum (strain IMS101).